A 563-amino-acid polypeptide reads, in one-letter code: MDYKQIVTAALSDALAGQLTRDEIASKLERPKTSDKGDMAFPTFTLAKLLHQAPQQIAQDLAEKLDKTSFEKVEVVGPYLNFFFDKGAYSAETLQTVLTAGADYGQNDDGQGGNVPIDMSSPNIAKPMSMGHLRSTVIGNSIAEILTKNGYHPIKDNHLGDWGTQFGKLITAYKLWGNEADVKADPINKLVEYYVRFHKEDVDKPELDDTAREWFRKLENGDEEAHELWQWFRDASLQEFNDVYEKLGVTFDTFNGEAFYNDKLEEVVQILKDKNLLVESQGAQVVDLSKYNLNPALILKSDGASLYITRDIATALYRDRTYHPAKNLYVVGSEQTYYFKQLKAVLQEMGVPSADDLEHIPFGLITVDGKKLSTRSGRIILLAKVLDDSVKLAAEEINEKNPDLANKDEVAQQVGVGAIVFGDLKNERTNNIDFVLADQLKFEGETGPYVQYSHARAESILRKAGKVTITTDGNQISDPEAWDTIKTLADFPAMVKMACDEFEPSVIAKYAIRLAKTFNKYYAHSKILTEDAELPARLALVKAVSTVLKESLRLLGVQAPDEM.

Positions 122 to 132 (PNIAKPMSMGH) match the 'HIGH' region motif.

Belongs to the class-I aminoacyl-tRNA synthetase family. As to quaternary structure, monomer.

It localises to the cytoplasm. The catalysed reaction is tRNA(Arg) + L-arginine + ATP = L-arginyl-tRNA(Arg) + AMP + diphosphate. In Levilactobacillus brevis (strain ATCC 367 / BCRC 12310 / CIP 105137 / JCM 1170 / LMG 11437 / NCIMB 947 / NCTC 947) (Lactobacillus brevis), this protein is Arginine--tRNA ligase.